The following is a 267-amino-acid chain: Diphthine--ammonia ligase (267 aa).

Tyrosine 97 is subject to Phosphotyrosine.

This sequence belongs to the Diphthine--ammonia ligase family.

It carries out the reaction diphthine-[translation elongation factor 2] + NH4(+) + ATP = diphthamide-[translation elongation factor 2] + AMP + diphosphate + H(+). Its pathway is protein modification; peptidyl-diphthamide biosynthesis. Its function is as follows. Amidase that may catalyze the last step of diphthamide biosynthesis using ammonium and ATP. Diphthamide biosynthesis consists in the conversion of an L-histidine residue in the translation elongation factor (EEF2) to diphthamide. The protein is Diphthine--ammonia ligase of Homo sapiens (Human).